We begin with the raw amino-acid sequence, 181 residues long: TATA-box-binding protein (181 aa).

2 tandem repeats follow at residues 7-83 (IVNV…MEYL) and 98-173 (VQNM…KNTV).

It belongs to the TBP family.

Its function is as follows. General factor that plays a role in the activation of archaeal genes transcribed by RNA polymerase. Binds specifically to the TATA box promoter element which lies close to the position of transcription initiation. In Methanococcus aeolicus (strain ATCC BAA-1280 / DSM 17508 / OCM 812 / Nankai-3), this protein is TATA-box-binding protein.